A 99-amino-acid polypeptide reads, in one-letter code: NADH-ubiquinone oxidoreductase chain 4L (99 aa).

A run of 3 helical transmembrane segments spans residues methionine 4 to serine 24, leucine 29 to phenylalanine 49, and phenylalanine 63 to isoleucine 83.

It belongs to the complex I subunit 4L family.

The protein resides in the mitochondrion membrane. The enzyme catalyses a ubiquinone + NADH + 5 H(+)(in) = a ubiquinol + NAD(+) + 4 H(+)(out). Its function is as follows. Core subunit of the mitochondrial membrane respiratory chain NADH dehydrogenase (Complex I) that is believed to belong to the minimal assembly required for catalysis. Complex I functions in the transfer of electrons from NADH to the respiratory chain. The immediate electron acceptor for the enzyme is believed to be ubiquinone. The sequence is that of NADH-ubiquinone oxidoreductase chain 4L (mt:ND4L) from Anopheles gambiae (African malaria mosquito).